Here is a 150-residue protein sequence, read N- to C-terminus: Large ribosomal subunit protein uL11 (150 aa).

Belongs to the universal ribosomal protein uL11 family. As to quaternary structure, part of the ribosomal stalk of the 50S ribosomal subunit. Interacts with L10 and the large rRNA to form the base of the stalk. L10 forms an elongated spine to which L12 dimers bind in a sequential fashion forming a multimeric L10(L12)X complex. In terms of processing, one or more lysine residues are methylated.

Its function is as follows. Forms part of the ribosomal stalk which helps the ribosome interact with GTP-bound translation factors. In Ureaplasma urealyticum serovar 10 (strain ATCC 33699 / Western), this protein is Large ribosomal subunit protein uL11.